A 279-amino-acid chain; its full sequence is Acetyl-coenzyme A carboxylase carboxyl transferase subunit beta (279 aa).

One can recognise a CoA carboxyltransferase N-terminal domain in the interval 23–279; that stretch reads LWWKCEECGA…LTTLLSLMKL (257 aa). The Zn(2+) site is built by C27, C30, C46, and C49. The C4-type zinc-finger motif lies at 27–49; the sequence is CEECGAALHKKQMEASDHTCPQC.

This sequence belongs to the AccD/PCCB family. Acetyl-CoA carboxylase is a heterohexamer composed of biotin carboxyl carrier protein (AccB), biotin carboxylase (AccC) and two subunits each of ACCase subunit alpha (AccA) and ACCase subunit beta (AccD). Requires Zn(2+) as cofactor.

The protein resides in the cytoplasm. The catalysed reaction is N(6)-carboxybiotinyl-L-lysyl-[protein] + acetyl-CoA = N(6)-biotinyl-L-lysyl-[protein] + malonyl-CoA. It participates in lipid metabolism; malonyl-CoA biosynthesis; malonyl-CoA from acetyl-CoA: step 1/1. Its function is as follows. Component of the acetyl coenzyme A carboxylase (ACC) complex. Biotin carboxylase (BC) catalyzes the carboxylation of biotin on its carrier protein (BCCP) and then the CO(2) group is transferred by the transcarboxylase to acetyl-CoA to form malonyl-CoA. In Chlorobium chlorochromatii (strain CaD3), this protein is Acetyl-coenzyme A carboxylase carboxyl transferase subunit beta.